The primary structure comprises 275 residues: Nitrogenase iron protein 1 (275 aa).

9-16 (GKGGIGKS) is an ATP binding site. Cysteine 97 provides a ligand contact to [4Fe-4S] cluster. Residue arginine 100 is modified to ADP-ribosylarginine; by dinitrogenase reductase ADP-ribosyltransferase. Residue cysteine 132 participates in [4Fe-4S] cluster binding.

This sequence belongs to the NifH/BchL/ChlL family. In terms of assembly, homodimer. The cofactor is [4Fe-4S] cluster. Post-translationally, the reversible ADP-ribosylation of Arg-100 inactivates the nitrogenase reductase and regulates nitrogenase activity.

The catalysed reaction is N2 + 8 reduced [2Fe-2S]-[ferredoxin] + 16 ATP + 16 H2O = H2 + 8 oxidized [2Fe-2S]-[ferredoxin] + 2 NH4(+) + 16 ADP + 16 phosphate + 6 H(+). In terms of biological role, the key enzymatic reactions in nitrogen fixation are catalyzed by the nitrogenase complex, which has 2 components: the iron protein and the molybdenum-iron protein. The chain is Nitrogenase iron protein 1 (nifH1) from Methanosarcina barkeri.